The chain runs to 523 residues: MVAALERGLSASKSFNFKRMFDSSSTKQQQSQTIVVENGDSHIVESNTPESQNSDSFVESPVESSLPMISPLTRPGKRSERQQADMEMMKDRFAKLLLGEDMSGGGKGVSSALALSNAITNLAASIFGEQTKLQPMPQDRQARWKKEIDWLLSVTDHIVEFVPSQQTSKDGVCTEIMVTRQRGDLLMNIPALRKLDAMLIDTLDNFRGHNEFWYVSRDSEEGQQARNDRTNDKWWLPPVKVPPGGLSEPSRRMLYFQKDSVTQVQKAAMAINAQVLSEMEIPESYIDSLPKNGRASLGDSIYKSITEEWFDPEQFLAMLDMSTEHKVLDLKNRIEASVVIWKRKLHTKDTKSSWGSAVSLEKRELFEERAETILVLLKQKFPGLPQSSLDISKIQFNKDVGQAVLESYSRILESLAYTVMSRIEDVLYTDTLALKQTLLAEETSDGGRTTETDSESAGSSNSGEEAEKHDPHSKTLLDFMGWNDNSSKGGDKPTKSPNLTPKKLSYLEKLENLNGFRSPKDRH.

Over residues 44-57 (VESNTPESQNSDSF) the composition is skewed to polar residues. 2 disordered regions span residues 44-83 (VESN…ERQQ) and 442-523 (ETSD…KDRH). The 365-residue stretch at 76–440 (GKRSERQQAD…TLALKQTLLA (365 aa)) folds into the PRONE domain. Residues 465–475 (EAEKHDPHSKT) are compositionally biased toward basic and acidic residues.

In terms of assembly, homodimer. The homodimer interacts with ARAC5/ROP4. Interacts with ARAC11/ROP1 and ARAC10/ROP11. Interacts with PRK6. In terms of tissue distribution, expressed in pollen grains and pollen tubes.

It is found in the cell membrane. In terms of biological role, guanine-nucleotide exchange factor (GEF) that acts as an activator of Rop (Rho of plants) GTPases by promoting the exchange of GDP for GTP. Active as homodimer. In Arabidopsis thaliana (Mouse-ear cress), this protein is Rho guanine nucleotide exchange factor 8.